Here is a 250-residue protein sequence, read N- to C-terminus: Probable dihydroorotate dehydrogenase B (NAD(+)), electron transfer subunit (250 aa).

The FAD-binding FR-type domain maps to 1-89; it reads MNRITVDQVR…RGPYGNGFQI (89 aa). [2Fe-2S] cluster is bound by residues Cys200, Cys205, Cys208, and Cys216.

This sequence belongs to the PyrK family. Heterotetramer of 2 PyrK and 2 PyrD type B subunits. Requires [2Fe-2S] cluster as cofactor. FAD serves as cofactor.

Its pathway is pyrimidine metabolism; UMP biosynthesis via de novo pathway; orotate from (S)-dihydroorotate (NAD(+) route): step 1/1. Functionally, responsible for channeling the electrons from the oxidation of dihydroorotate from the FMN redox center in the PyrD type B subunit to the ultimate electron acceptor NAD(+). In Thermoplasma acidophilum (strain ATCC 25905 / DSM 1728 / JCM 9062 / NBRC 15155 / AMRC-C165), this protein is Probable dihydroorotate dehydrogenase B (NAD(+)), electron transfer subunit.